The chain runs to 108 residues: Phosphoribosyl-AMP cyclohydrolase (108 aa).

Asp73 contributes to the Mg(2+) binding site. A Zn(2+)-binding site is contributed by Cys74. Residues Asp75 and Asp77 each coordinate Mg(2+). Zn(2+) is bound by residues Cys90 and Cys97.

The protein belongs to the PRA-CH family. In terms of assembly, homodimer. The cofactor is Mg(2+). Requires Zn(2+) as cofactor.

It localises to the cytoplasm. The enzyme catalyses 1-(5-phospho-beta-D-ribosyl)-5'-AMP + H2O = 1-(5-phospho-beta-D-ribosyl)-5-[(5-phospho-beta-D-ribosylamino)methylideneamino]imidazole-4-carboxamide. It functions in the pathway amino-acid biosynthesis; L-histidine biosynthesis; L-histidine from 5-phospho-alpha-D-ribose 1-diphosphate: step 3/9. Its function is as follows. Catalyzes the hydrolysis of the adenine ring of phosphoribosyl-AMP. The chain is Phosphoribosyl-AMP cyclohydrolase from Lactiplantibacillus plantarum (strain ATCC BAA-793 / NCIMB 8826 / WCFS1) (Lactobacillus plantarum).